A 280-amino-acid polypeptide reads, in one-letter code: Putative sugar uptake protein (280 aa).

10 helical membrane-spanning segments follow: residues 4–21 (LIAL…LIAG), 33–52 (MGLG…IHPA), 56–78 (ITIF…GQFI), 91–113 (LSTG…EWTS), 117–136 (YLIG…LTAI), 149–166 (IILL…SSFP), 176–195 (LFLP…LLVS), 207–229 (WLNI…SAQL), 233–255 (ITAF…FFIG), and 262–279 (ELIA…GAAI).

The protein belongs to the GRP transporter (TC 2.A.7.5) family.

The protein localises to the cell membrane. In Lactobacillus helveticus (Lactobacillus suntoryeus), this protein is Putative sugar uptake protein.